The primary structure comprises 613 residues: Cleavage and polyadenylation specificity factor subunit 3-II (613 aa).

Positions 67 to 72 match the HXHXDH motif motif; that stretch reads HFHMDH.

Belongs to the metallo-beta-lactamase superfamily. RNA-metabolizing metallo-beta-lactamase-like family. INTS11 subfamily. As to quaternary structure, component of the CPSF complex, at least composed of CPSF160, CPSF100, CPSF73-I, CPSF73-II, CPSF30, FY and FIPS5. Interacts with CPSF30, CPSF100, CPSF160 and FY. Highly expressed in senescence leaves, petals, stamens, pollen and late stages of siliques with seeds. Also detected in roots, stems, leaves and seedlings.

The protein resides in the nucleus. Its function is as follows. Component of the cleavage and polyadenylation specificity factor (CPSF) complex that play a key role in pre-mRNA 3'-end formation, recognizing the AAUAAA signal sequence and interacting with poly(A) polymerase and other factors to bring about cleavage and poly(A) addition. May function as mRNA 3'-end-processing endonuclease and also be involved in the histone 3'-end pre-mRNA processing. The polypeptide is Cleavage and polyadenylation specificity factor subunit 3-II (CPSF73-II) (Arabidopsis thaliana (Mouse-ear cress)).